We begin with the raw amino-acid sequence, 185 residues long: UPF0669 protein C6orf120 homolog (185 aa).

A signal peptide spans 1–23 (MATPWRRALLMILASQVVTLVKC). Asparagine 47 carries an N-linked (GlcNAc...) asparagine glycan.

The protein belongs to the UPF0669 family.

The protein resides in the secreted. Functionally, may be involved in induction of apoptosis in CD4(+) T-cells, but not CD8(+) T-cells or hepatocytes. The protein is UPF0669 protein C6orf120 homolog of Mus musculus (Mouse).